We begin with the raw amino-acid sequence, 143 residues long: Large ribosomal subunit protein uL15 (143 aa).

The disordered stretch occupies residues 1–48; the sequence is MRLNTISPSKGAKHSSKRLGRGIGSGLGKTSGRGHKGQKARSGCSIHR. Positions 11 to 20 are enriched in basic residues; that stretch reads GAKHSSKRLG. Over residues 21-31 the composition is skewed to gly residues; that stretch reads RGIGSGLGKTS.

This sequence belongs to the universal ribosomal protein uL15 family. As to quaternary structure, part of the 50S ribosomal subunit.

Functionally, binds to the 23S rRNA. The polypeptide is Large ribosomal subunit protein uL15 (Baumannia cicadellinicola subsp. Homalodisca coagulata).